The following is a 287-amino-acid chain: Protein UL24 homolog (287 aa).

Disordered regions lie at residues 1-33 and 254-287; these read MARR…FSRR and RVGK…DSNL. The segment covering 16-33 has biased composition (basic residues); sequence HRSRTRSKTAHHRKFSRR.

The protein belongs to the herpesviridae UL24 family.

The protein localises to the virion. It localises to the host cytoplasm. The protein resides in the host nucleus. It is found in the host nucleolus. Its subcellular location is the host Golgi apparatus. Functionally, may participate in nuclear egress of viral particles. Plays a role in the dispersal of several host nucleolar proteins including NCL/nucleolin and NPM1. Since deletion of host NCL/nucleolin negatively impact on nuclear egress, UL24 supposedly acts on this process through its effect on host nucleoli. The protein is Protein UL24 homolog of Infectious laryngotracheitis virus (strain Thorne V882) (ILTV).